The primary structure comprises 98 residues: Small ribosomal subunit protein eS24 (98 aa).

It belongs to the eukaryotic ribosomal protein eS24 family. In terms of assembly, part of the 30S ribosomal subunit.

The chain is Small ribosomal subunit protein eS24 from Thermococcus kodakarensis (strain ATCC BAA-918 / JCM 12380 / KOD1) (Pyrococcus kodakaraensis (strain KOD1)).